A 166-amino-acid polypeptide reads, in one-letter code: UPF0561 protein C2orf68 homolog (166 aa).

Residues N32–E49 are compositionally biased toward basic and acidic residues. The segment at N32–L107 is disordered. Residues E91 to E101 show a composition bias toward low complexity.

The protein belongs to the UPF0561 family.

This Mus musculus (Mouse) protein is UPF0561 protein C2orf68 homolog.